A 407-amino-acid chain; its full sequence is Rubber oxygenase (407 aa).

The segment at residues 1–30 (MDGFSRRRMLMTGGALGAVGALGAATRALA) is a signal peptide (tat-type signal). Residue histidine 198 coordinates heme.

It belongs to the rubber oxygenase Lcp family. It depends on heme b as a cofactor. Post-translationally, exported by the Tat system. The position of the signal peptide cleavage has not been experimentally proven.

Its subcellular location is the secreted. It participates in biopolymer metabolism. Its function is as follows. Involved in the initial step of rubber degradation. Catalyzes the oxidative C-C cleavage of poly(cis-1,4-isoprene) in synthetic as well as in natural rubber by the addition of oxygen (O2) to the double bonds, leading to a mixture of oligonucleotide-isoprenoids with terminal keto and aldehyde groups (endo-type cleavage). The cleavage products are of different lengths, ranging from C20 (four isoprene units) to higher oligo-isoprenoids. Is not able to cleave low-molecular-weight substrate analogs with isoprenoid structure such as squalene (1,4-trans-isoprenoid), carotenoids, or alpha-tocopherol. This chain is Rubber oxygenase, found in Streptomyces sp. (strain K30).